We begin with the raw amino-acid sequence, 483 residues long: Probable glycosyltransferase 6 (483 aa).

At 1–40 (MAASETAPFGVSAASKGGGGVAGARAQHGQLAVAGRVHDA) the chain is on the cytoplasmic side. The helical; Signal-anchor for type II membrane protein transmembrane segment at 41-61 (LVFAAGAVAAVLVLLATASFL) threads the bilayer. Over 62–483 (SPMPVTNLVA…PLPFDYPAAR (422 aa)) the chain is Lumenal. Asparagine 144 is a glycosylation site (N-linked (GlcNAc...) asparagine).

This sequence belongs to the glycosyltransferase 34 family.

Its subcellular location is the golgi apparatus membrane. Its function is as follows. Probable glycosyltransferase that may be involved in the biosynthesis of xyloglucan. This Oryza sativa subsp. japonica (Rice) protein is Probable glycosyltransferase 6.